Here is a 366-residue protein sequence, read N- to C-terminus: Chorismate synthase (366 aa).

R48 serves as a coordination point for NADP(+). FMN-binding positions include 125-127 (RSS), G285, 300-304 (KPTPS), and R327.

It belongs to the chorismate synthase family. FMNH2 is required as a cofactor.

It catalyses the reaction 5-O-(1-carboxyvinyl)-3-phosphoshikimate = chorismate + phosphate. It functions in the pathway metabolic intermediate biosynthesis; chorismate biosynthesis; chorismate from D-erythrose 4-phosphate and phosphoenolpyruvate: step 7/7. Its function is as follows. Catalyzes the anti-1,4-elimination of the C-3 phosphate and the C-6 proR hydrogen from 5-enolpyruvylshikimate-3-phosphate (EPSP) to yield chorismate, which is the branch point compound that serves as the starting substrate for the three terminal pathways of aromatic amino acid biosynthesis. This reaction introduces a second double bond into the aromatic ring system. This is Chorismate synthase from Methanococcoides burtonii (strain DSM 6242 / NBRC 107633 / OCM 468 / ACE-M).